The chain runs to 326 residues: MRAVWVLGIDTSCDDTGVGLVRDGKVVVNLVASQVRLHEAFGGVVPELASREHLKALPLLVERALAEAGLRPKDLDLVAATRGPGLIGALLVGYTFAKGMAFALDRPFYAVHHLEGHIAAAWPEGLPPPFLALVASGGHTHLYEVLDLGRYRLLGATRDDAAGEAFDKVARLLGLGFPGGPEVERLAEEAEEAIPFPVPLRGQEGYDFSFSGLKTKALHLVEKGLPKAALAKGFQEAAIAHLAEVVLKAAKDTGHRVLLVAGGVAANRALQERFKEAGLEVHFPPRGLSQDNGAMIALAAWRRHQRGFPPSPLSLGATAYWPLEEA.

Fe cation contacts are provided by histidine 113 and histidine 117. Substrate is bound by residues 134-138 (VASGG), aspartate 167, glycine 180, and asparagine 267. Aspartate 291 provides a ligand contact to Fe cation.

This sequence belongs to the KAE1 / TsaD family. Fe(2+) serves as cofactor.

It localises to the cytoplasm. The catalysed reaction is L-threonylcarbamoyladenylate + adenosine(37) in tRNA = N(6)-L-threonylcarbamoyladenosine(37) in tRNA + AMP + H(+). Its function is as follows. Required for the formation of a threonylcarbamoyl group on adenosine at position 37 (t(6)A37) in tRNAs that read codons beginning with adenine. Is involved in the transfer of the threonylcarbamoyl moiety of threonylcarbamoyl-AMP (TC-AMP) to the N6 group of A37, together with TsaE and TsaB. TsaD likely plays a direct catalytic role in this reaction. The sequence is that of tRNA N6-adenosine threonylcarbamoyltransferase from Thermus thermophilus (strain ATCC 27634 / DSM 579 / HB8).